Reading from the N-terminus, the 206-residue chain is Holliday junction branch migration complex subunit RuvA (206 aa).

A domain I region spans residues 1–67 (MIASIFGKIT…QILEEGFAFN (67 aa)). The domain II stretch occupies residues 68–141 (TLEEKEWFSK…YDRDDGGKRI (74 aa)). Residues 141-145 (IKPNT) form a flexible linker region. A domain III region spans residues 146–206 (AMANDYDEMF…QNNEVTNKTA (61 aa)).

It belongs to the RuvA family. In terms of assembly, homotetramer. Forms an RuvA(8)-RuvB(12)-Holliday junction (HJ) complex. HJ DNA is sandwiched between 2 RuvA tetramers; dsDNA enters through RuvA and exits via RuvB. An RuvB hexamer assembles on each DNA strand where it exits the tetramer. Each RuvB hexamer is contacted by two RuvA subunits (via domain III) on 2 adjacent RuvB subunits; this complex drives branch migration. In the full resolvosome a probable DNA-RuvA(4)-RuvB(12)-RuvC(2) complex forms which resolves the HJ.

The protein resides in the cytoplasm. The RuvA-RuvB-RuvC complex processes Holliday junction (HJ) DNA during genetic recombination and DNA repair, while the RuvA-RuvB complex plays an important role in the rescue of blocked DNA replication forks via replication fork reversal (RFR). RuvA specifically binds to HJ cruciform DNA, conferring on it an open structure. The RuvB hexamer acts as an ATP-dependent pump, pulling dsDNA into and through the RuvAB complex. HJ branch migration allows RuvC to scan DNA until it finds its consensus sequence, where it cleaves and resolves the cruciform DNA. The protein is Holliday junction branch migration complex subunit RuvA of Mycoplasma pneumoniae (strain ATCC 29342 / M129 / Subtype 1) (Mycoplasmoides pneumoniae).